Consider the following 534-residue polypeptide: CTP synthase (534 aa).

An amidoligase domain region spans residues 1 to 266 (MKTKFIFVTG…DEQVVEKLNI (266 aa)). Ser-14 serves as a coordination point for CTP. Ser-14 contributes to the UTP binding site. Residues 15–20 (SIGKGL) and Asp-72 each bind ATP. Positions 72 and 140 each coordinate Mg(2+). Residues 147-149 (DIE), 187-192 (KTKPTQ), and Lys-223 each bind CTP. Residues 187-192 (KTKPTQ) and Lys-223 contribute to the UTP site. The Glutamine amidotransferase type-1 domain occupies 292-534 (RIAIVGKYVN…IAAALHNIKA (243 aa)). Gly-354 is an L-glutamine binding site. Cys-381 functions as the Nucleophile; for glutamine hydrolysis in the catalytic mechanism. L-glutamine is bound by residues 382 to 385 (LGMQ), Glu-405, and Arg-462. Active-site residues include His-507 and Glu-509.

It belongs to the CTP synthase family. As to quaternary structure, homotetramer.

It catalyses the reaction UTP + L-glutamine + ATP + H2O = CTP + L-glutamate + ADP + phosphate + 2 H(+). The enzyme catalyses L-glutamine + H2O = L-glutamate + NH4(+). It carries out the reaction UTP + NH4(+) + ATP = CTP + ADP + phosphate + 2 H(+). It participates in pyrimidine metabolism; CTP biosynthesis via de novo pathway; CTP from UDP: step 2/2. With respect to regulation, allosterically activated by GTP, when glutamine is the substrate; GTP has no effect on the reaction when ammonia is the substrate. The allosteric effector GTP functions by stabilizing the protein conformation that binds the tetrahedral intermediate(s) formed during glutamine hydrolysis. Inhibited by the product CTP, via allosteric rather than competitive inhibition. Functionally, catalyzes the ATP-dependent amination of UTP to CTP with either L-glutamine or ammonia as the source of nitrogen. Regulates intracellular CTP levels through interactions with the four ribonucleotide triphosphates. The chain is CTP synthase from Geotalea uraniireducens (strain Rf4) (Geobacter uraniireducens).